A 149-amino-acid chain; its full sequence is Transcriptional repressor NrdR (149 aa).

A zinc finger spans residues 3 to 34 (CPFCSAVDTKVIDSRLVAEGHQVRRRRECLLC). Residues 49 to 139 (PRVIKSNGSR…VYRSFEDIRE (91 aa)) form the ATP-cone domain.

It belongs to the NrdR family. The cofactor is Zn(2+).

In terms of biological role, negatively regulates transcription of bacterial ribonucleotide reductase nrd genes and operons by binding to NrdR-boxes. This chain is Transcriptional repressor NrdR, found in Aeromonas hydrophila subsp. hydrophila (strain ATCC 7966 / DSM 30187 / BCRC 13018 / CCUG 14551 / JCM 1027 / KCTC 2358 / NCIMB 9240 / NCTC 8049).